The primary structure comprises 711 residues: Ribosomal RNA large subunit methyltransferase K/L (711 aa).

The THUMP domain occupies 42 to 153 (DAQRAVLWSR…KGRATISVDL (112 aa)).

The protein belongs to the methyltransferase superfamily. RlmKL family.

Its subcellular location is the cytoplasm. The enzyme catalyses guanosine(2445) in 23S rRNA + S-adenosyl-L-methionine = N(2)-methylguanosine(2445) in 23S rRNA + S-adenosyl-L-homocysteine + H(+). It carries out the reaction guanosine(2069) in 23S rRNA + S-adenosyl-L-methionine = N(2)-methylguanosine(2069) in 23S rRNA + S-adenosyl-L-homocysteine + H(+). Its function is as follows. Specifically methylates the guanine in position 2445 (m2G2445) and the guanine in position 2069 (m7G2069) of 23S rRNA. The protein is Ribosomal RNA large subunit methyltransferase K/L of Xanthomonas campestris pv. campestris (strain B100).